A 97-amino-acid chain; its full sequence is MPEPDARLTAWVHGHVQGVGFRWWTRCRALELGLTGYAANQPDGRVLVVAQGPRPAGEKLLELLRGGTTWPSRPGRVDKVVADWSAPQERFEGFVER.

The region spanning 7–97 (RLTAWVHGHV…QERFEGFVER (91 aa)) is the Acylphosphatase-like domain. Active-site residues include arginine 22 and asparagine 40.

It belongs to the acylphosphatase family.

The enzyme catalyses an acyl phosphate + H2O = a carboxylate + phosphate + H(+). This is Acylphosphatase (acyP) from Mycobacterium avium (strain 104).